The following is a 308-amino-acid chain: Acetyl-coenzyme A carboxylase carboxyl transferase subunit beta (308 aa).

A CoA carboxyltransferase N-terminal domain is found at 25–294 (VWTKCTSCEQ…PLVVSVNDSP (270 aa)). The Zn(2+) site is built by Cys29, Cys32, Cys48, and Cys51. The C4-type zinc-finger motif lies at 29 to 51 (CTSCEQVLYHAELERNLEVCPKC).

It belongs to the AccD/PCCB family. In terms of assembly, acetyl-CoA carboxylase is a heterohexamer composed of biotin carboxyl carrier protein (AccB), biotin carboxylase (AccC) and two subunits each of ACCase subunit alpha (AccA) and ACCase subunit beta (AccD). Zn(2+) is required as a cofactor.

The protein localises to the cytoplasm. The enzyme catalyses N(6)-carboxybiotinyl-L-lysyl-[protein] + acetyl-CoA = N(6)-biotinyl-L-lysyl-[protein] + malonyl-CoA. It functions in the pathway lipid metabolism; malonyl-CoA biosynthesis; malonyl-CoA from acetyl-CoA: step 1/1. In terms of biological role, component of the acetyl coenzyme A carboxylase (ACC) complex. Biotin carboxylase (BC) catalyzes the carboxylation of biotin on its carrier protein (BCCP) and then the CO(2) group is transferred by the transcarboxylase to acetyl-CoA to form malonyl-CoA. The sequence is that of Acetyl-coenzyme A carboxylase carboxyl transferase subunit beta from Vibrio vulnificus (strain CMCP6).